We begin with the raw amino-acid sequence, 114 residues long: Flagellar hook-basal body complex protein FliE (114 aa).

It belongs to the FliE family.

The protein resides in the bacterial flagellum basal body. The chain is Flagellar hook-basal body complex protein FliE from Burkholderia lata (strain ATCC 17760 / DSM 23089 / LMG 22485 / NCIMB 9086 / R18194 / 383).